A 122-amino-acid chain; its full sequence is Large ribosomal subunit protein uL14 (122 aa).

Belongs to the universal ribosomal protein uL14 family. As to quaternary structure, part of the 50S ribosomal subunit. Forms a cluster with proteins L3 and L19. In the 70S ribosome, L14 and L19 interact and together make contacts with the 16S rRNA in bridges B5 and B8.

Functionally, binds to 23S rRNA. Forms part of two intersubunit bridges in the 70S ribosome. The chain is Large ribosomal subunit protein uL14 from Mesorhizobium japonicum (strain LMG 29417 / CECT 9101 / MAFF 303099) (Mesorhizobium loti (strain MAFF 303099)).